We begin with the raw amino-acid sequence, 508 residues long: Photosystem II CP47 reaction center protein (508 aa).

6 consecutive transmembrane segments (helical) span residues 21–36 (SVHI…WAGS), 101–115 (IVFS…IWHW), 140–156 (GIHL…FGAF), 203–218 (IAAG…FHLS), 237–252 (VLSS…AFVV), and 457–472 (SFAL…HGAR).

The protein belongs to the PsbB/PsbC family. PsbB subfamily. PSII is composed of 1 copy each of membrane proteins PsbA, PsbB, PsbC, PsbD, PsbE, PsbF, PsbH, PsbI, PsbJ, PsbK, PsbL, PsbM, PsbT, PsbX, PsbY, PsbZ, Psb30/Ycf12, at least 3 peripheral proteins of the oxygen-evolving complex and a large number of cofactors. It forms dimeric complexes. It depends on Binds multiple chlorophylls. PSII binds additional chlorophylls, carotenoids and specific lipids. as a cofactor.

It localises to the plastid. The protein localises to the chloroplast thylakoid membrane. Functionally, one of the components of the core complex of photosystem II (PSII). It binds chlorophyll and helps catalyze the primary light-induced photochemical processes of PSII. PSII is a light-driven water:plastoquinone oxidoreductase, using light energy to abstract electrons from H(2)O, generating O(2) and a proton gradient subsequently used for ATP formation. This is Photosystem II CP47 reaction center protein from Acorus calamus var. americanus (American sweet flag).